Here is a 294-residue protein sequence, read N- to C-terminus: Porphobilinogen deaminase (294 aa).

C232 carries the post-translational modification S-(dipyrrolylmethanemethyl)cysteine.

The protein belongs to the HMBS family. In terms of assembly, monomer. Requires dipyrromethane as cofactor.

The catalysed reaction is 4 porphobilinogen + H2O = hydroxymethylbilane + 4 NH4(+). It participates in porphyrin-containing compound metabolism; protoporphyrin-IX biosynthesis; coproporphyrinogen-III from 5-aminolevulinate: step 2/4. Functionally, tetrapolymerization of the monopyrrole PBG into the hydroxymethylbilane pre-uroporphyrinogen in several discrete steps. In Corynebacterium diphtheriae (strain ATCC 700971 / NCTC 13129 / Biotype gravis), this protein is Porphobilinogen deaminase.